We begin with the raw amino-acid sequence, 581 residues long: ATP-dependent lipid A-core flippase (581 aa).

The next 5 membrane-spanning stretches (helical) occupy residues 27 to 47 (VFLA…FPAI), 63 to 83 (MVWL…VIVY), 154 to 174 (IALI…TLAI), 251 to 271 (MTPI…FLAL), and 279 to 299 (GASA…ISPV). The ABC transmembrane type-1 domain maps to 28 to 311 (FLAVIGMVGT…LATVNPTIQR (284 aa)). In terms of domain architecture, ABC transporter spans 343–579 (ICFDNVSLRY…GSYYANLSRL (237 aa)). 377-384 (GASGGGKS) serves as a coordination point for ATP.

Belongs to the ABC transporter superfamily. Lipid exporter (TC 3.A.1.106) family. In terms of assembly, homodimer.

It localises to the cell inner membrane. It carries out the reaction ATP + H2O + lipid A-core oligosaccharideSide 1 = ADP + phosphate + lipid A-core oligosaccharideSide 2.. In terms of biological role, involved in lipopolysaccharide (LPS) biosynthesis. Translocates lipid A-core from the inner to the outer leaflet of the inner membrane. Transmembrane domains (TMD) form a pore in the inner membrane and the ATP-binding domain (NBD) is responsible for energy generation. This Albidiferax ferrireducens (strain ATCC BAA-621 / DSM 15236 / T118) (Rhodoferax ferrireducens) protein is ATP-dependent lipid A-core flippase.